The following is a 400-amino-acid chain: Nicotinate phosphoribosyltransferase (400 aa).

Position 220 is a phosphohistidine; by autocatalysis (histidine 220).

Belongs to the NAPRTase family. Post-translationally, transiently phosphorylated on a His residue during the reaction cycle. Phosphorylation strongly increases the affinity for substrates and increases the rate of nicotinate D-ribonucleotide production. Dephosphorylation regenerates the low-affinity form of the enzyme, leading to product release.

The enzyme catalyses nicotinate + 5-phospho-alpha-D-ribose 1-diphosphate + ATP + H2O = nicotinate beta-D-ribonucleotide + ADP + phosphate + diphosphate. It functions in the pathway cofactor biosynthesis; NAD(+) biosynthesis; nicotinate D-ribonucleotide from nicotinate: step 1/1. Functionally, catalyzes the synthesis of beta-nicotinate D-ribonucleotide from nicotinate and 5-phospho-D-ribose 1-phosphate at the expense of ATP. In Salmonella agona (strain SL483), this protein is Nicotinate phosphoribosyltransferase.